The following is a 95-amino-acid chain: Putative membrane protein insertion efficiency factor (95 aa).

The disordered stretch occupies residues 72-95; the sequence is FDPVPDAPTSPSPSSSCSCKGPHP. Residues 83–95 are compositionally biased toward low complexity; sequence SPSSSCSCKGPHP.

Belongs to the UPF0161 family.

Its subcellular location is the cell inner membrane. Could be involved in insertion of integral membrane proteins into the membrane. The sequence is that of Putative membrane protein insertion efficiency factor from Xanthomonas axonopodis pv. citri (strain 306).